Here is a 303-residue protein sequence, read N- to C-terminus: Probable serine/threonine-protein kinase FPV212 (303 aa).

The Protein kinase domain maps to 25–303 (WILGKQLGSG…NYESLKQMFL (279 aa)). ATP is bound by residues 31–39 (LGSGGFGLV) and Lys-54. Catalysis depends on Asp-160, which acts as the Proton acceptor.

This sequence belongs to the protein kinase superfamily. Ser/Thr protein kinase family. Poxviruses subfamily.

The enzyme catalyses L-seryl-[protein] + ATP = O-phospho-L-seryl-[protein] + ADP + H(+). The catalysed reaction is L-threonyl-[protein] + ATP = O-phospho-L-threonyl-[protein] + ADP + H(+). The sequence is that of Probable serine/threonine-protein kinase FPV212 from Vertebrata (FPV).